Here is a 390-residue protein sequence, read N- to C-terminus: MRRCFSKITDCHLGFKNSNFLLVGSEVGSGSVTRTITTTTSERLFSSSYAAHQVDQIKDNPVSDMLIDKFGRLHTYLRISLTERCNLRCQYCMPSEGVELTPKPQLLSQSEIVRLAGLFVSAGVNKIRLTGGEPTVRKDIEEICLQLSSLKGLKNLAITTNGITLAKKLPRLKECGLDSLNISLDTLVPAKFEFLTRRKGHDRVMKSIDTAIELGYNPVKVNCVIMRGLNDDEICDFVELTRDKPINVRFIEFMPFDGNVWNVKKLVPYAEVMDKVVKRFPSIKRMQDHPTETAKNFTIDGHCGSVSFITSMTEHFCAGCNRLRLLADGNFKVCLFGPSEVSLRDPLRSGADDEALREIIGAAVKRKKAAHAGMLDIAKTANRPMIHIGG.

A mitochondrion-targeting transit peptide spans 1–45; it reads MRRCFSKITDCHLGFKNSNFLLVGSEVGSGSVTRTITTTTSERLF. A Radical SAM core domain is found at 69-290; sequence KFGRLHTYLR…PSIKRMQDHP (222 aa). GTP is bound at residue R78. [4Fe-4S] cluster-binding residues include C85 and C89. S-adenosyl-L-methionine is bound at residue Y91. Residue C92 coordinates [4Fe-4S] cluster. R128 contacts GTP. An S-adenosyl-L-methionine-binding site is contributed by G132. T159 lines the GTP pocket. Residue S183 coordinates S-adenosyl-L-methionine. K220 lines the GTP pocket. M254 serves as a coordination point for S-adenosyl-L-methionine. [4Fe-4S] cluster is bound by residues C317 and C320. 322–324 contacts GTP; sequence RLR. C334 is a [4Fe-4S] cluster binding site.

Belongs to the radical SAM superfamily. MoaA family. Homodimer. It depends on [4Fe-4S] cluster as a cofactor. Expressed in all organs, with an abundant expression in the roots.

It is found in the mitochondrion matrix. It carries out the reaction GTP + AH2 + S-adenosyl-L-methionine = (8S)-3',8-cyclo-7,8-dihydroguanosine 5'-triphosphate + 5'-deoxyadenosine + L-methionine + A + H(+). It participates in cofactor biosynthesis; molybdopterin biosynthesis. Catalyzes the cyclization of GTP to (8S)-3',8-cyclo-7,8-dihydroguanosine 5'-triphosphate. The chain is GTP 3',8-cyclase, mitochondrial (CNX2) from Arabidopsis thaliana (Mouse-ear cress).